A 255-amino-acid chain; its full sequence is Acetylglutamate kinase (255 aa).

Residues 40 to 41 (GG), Arg-62, and Asn-153 each bind substrate.

The protein belongs to the acetylglutamate kinase family. ArgB subfamily.

Its subcellular location is the cytoplasm. The catalysed reaction is N-acetyl-L-glutamate + ATP = N-acetyl-L-glutamyl 5-phosphate + ADP. Its pathway is amino-acid biosynthesis; L-arginine biosynthesis; N(2)-acetyl-L-ornithine from L-glutamate: step 2/4. Its function is as follows. Catalyzes the ATP-dependent phosphorylation of N-acetyl-L-glutamate. The sequence is that of Acetylglutamate kinase from Bacillus cereus (strain AH820).